We begin with the raw amino-acid sequence, 499 residues long: Glycerol kinase (499 aa).

Residue T13 participates in ADP binding. Residues T13, T14, and S15 each coordinate ATP. T13 is a binding site for sn-glycerol 3-phosphate. R17 is an ADP binding site. Sn-glycerol 3-phosphate contacts are provided by R83, E84, Y135, and D245. Glycerol-binding residues include R83, E84, Y135, D245, and Q246. T267 and G310 together coordinate ADP. T267, G310, Q314, and G411 together coordinate ATP. ADP contacts are provided by G411 and N415.

It belongs to the FGGY kinase family.

It catalyses the reaction glycerol + ATP = sn-glycerol 3-phosphate + ADP + H(+). The protein operates within polyol metabolism; glycerol degradation via glycerol kinase pathway; sn-glycerol 3-phosphate from glycerol: step 1/1. Its activity is regulated as follows. Inhibited by fructose 1,6-bisphosphate (FBP). Key enzyme in the regulation of glycerol uptake and metabolism. Catalyzes the phosphorylation of glycerol to yield sn-glycerol 3-phosphate. The polypeptide is Glycerol kinase (Stenotrophomonas maltophilia (strain R551-3)).